Here is a 306-residue protein sequence, read N- to C-terminus: tRNA pseudouridine synthase B (306 aa).

Aspartate 48 functions as the Nucleophile in the catalytic mechanism.

This sequence belongs to the pseudouridine synthase TruB family. Type 1 subfamily.

It carries out the reaction uridine(55) in tRNA = pseudouridine(55) in tRNA. In terms of biological role, responsible for synthesis of pseudouridine from uracil-55 in the psi GC loop of transfer RNAs. In Ectopseudomonas mendocina (strain ymp) (Pseudomonas mendocina), this protein is tRNA pseudouridine synthase B.